The primary structure comprises 201 residues: Orotidine 5'-phosphate decarboxylase (201 aa).

Residues aspartate 8, lysine 26, 52–61 (DLKFCDIPST), threonine 106, arginine 153, glutamine 161, glycine 180, and arginine 181 each bind substrate. Lysine 54 (proton donor) is an active-site residue.

This sequence belongs to the OMP decarboxylase family. Type 1 subfamily. Homodimer.

It carries out the reaction orotidine 5'-phosphate + H(+) = UMP + CO2. The protein operates within pyrimidine metabolism; UMP biosynthesis via de novo pathway; UMP from orotate: step 2/2. In terms of biological role, catalyzes the decarboxylation of orotidine 5'-monophosphate (OMP) to uridine 5'-monophosphate (UMP). This is Orotidine 5'-phosphate decarboxylase (pyrF) from Thermotoga maritima (strain ATCC 43589 / DSM 3109 / JCM 10099 / NBRC 100826 / MSB8).